Reading from the N-terminus, the 483-residue chain is Probable gamma-aminobutyrate transaminase 4 (483 aa).

138–139 (GS) is a pyridoxal 5'-phosphate binding site. Residue tyrosine 171 coordinates substrate. Aspartate 278 contributes to the pyridoxal 5'-phosphate binding site. Position 307 (lysine 307) interacts with substrate. Residue lysine 307 is modified to N6-(pyridoxal phosphate)lysine.

This sequence belongs to the class-III pyridoxal-phosphate-dependent aminotransferase family. Not detected in roots, stems, flowers or leaves of healthy plants.

The protein resides in the cytoplasm. It carries out the reaction 4-aminobutanoate + pyruvate = succinate semialdehyde + L-alanine. It catalyses the reaction 4-aminobutanoate + glyoxylate = succinate semialdehyde + glycine. Functionally, transaminase that degrades gamma-amino butyric acid (GABA). The sequence is that of Probable gamma-aminobutyrate transaminase 4 (GABA-T) from Oryza sativa subsp. japonica (Rice).